We begin with the raw amino-acid sequence, 127 residues long: Oleate-induced peroxisomal protein POX18 (127 aa).

Residues 14–119 enclose the SCP2 domain; it reads FKELHEGLAD…KATAIESVFK (106 aa). A hydrophobic region spans residues 33 to 41; sequence AVNAVIVIT. Residues 43–52 form a hydrophilic region; sequence KNKEGKEQSW.

In terms of assembly, monomer.

The protein localises to the peroxisome. It functions in the pathway lipid metabolism; fatty acid metabolism. In terms of biological role, is involved in beta-oxidation of long-chain fatty acids. Its exact function is unknown, but possesses a nonspecific lipid-transfer activity, despite the absence of a cysteine residue thought to be essential for the activity of its mammalian counterparts. The sequence is that of Oleate-induced peroxisomal protein POX18 (POX18) from Candida maltosa (Yeast).